Reading from the N-terminus, the 494-residue chain is Lysine--tRNA ligase (494 aa).

Mg(2+) contacts are provided by glutamate 407 and glutamate 414.

The protein belongs to the class-II aminoacyl-tRNA synthetase family. In terms of assembly, homodimer. Requires Mg(2+) as cofactor.

It localises to the cytoplasm. It carries out the reaction tRNA(Lys) + L-lysine + ATP = L-lysyl-tRNA(Lys) + AMP + diphosphate. The protein is Lysine--tRNA ligase of Lactococcus lactis subsp. cremoris (strain SK11).